Here is a 764-residue protein sequence, read N- to C-terminus: Polyribonucleotide nucleotidyltransferase (764 aa).

The Mg(2+) site is built by D541 and D547. Positions 607-666 (PRVTAIKIPVDKIGEVIGPKGKVINQITEDTGANISIEDDGTVFVGATDGPSAQAAIDAI) constitute a KH domain. Residues 678–747 (GERFLGTVVK…NRGKISLVPV (70 aa)) enclose the S1 motif domain.

This sequence belongs to the polyribonucleotide nucleotidyltransferase family. Mg(2+) serves as cofactor.

The protein localises to the cytoplasm. The catalysed reaction is RNA(n+1) + phosphate = RNA(n) + a ribonucleoside 5'-diphosphate. Its function is as follows. Involved in mRNA degradation. Catalyzes the phosphorolysis of single-stranded polyribonucleotides processively in the 3'- to 5'-direction. This is Polyribonucleotide nucleotidyltransferase from Nocardia farcinica (strain IFM 10152).